Here is a 222-residue protein sequence, read N- to C-terminus: Imidazoleglycerol-phosphate dehydratase (222 aa).

The protein belongs to the imidazoleglycerol-phosphate dehydratase family.

The catalysed reaction is D-erythro-1-(imidazol-4-yl)glycerol 3-phosphate = 3-(imidazol-4-yl)-2-oxopropyl phosphate + H2O. The protein operates within amino-acid biosynthesis; L-histidine biosynthesis; L-histidine from 5-phospho-alpha-D-ribose 1-diphosphate: step 6/9. The protein is Imidazoleglycerol-phosphate dehydratase (HIS3) of Scheffersomyces stipitis (strain ATCC 58785 / CBS 6054 / NBRC 10063 / NRRL Y-11545) (Yeast).